The chain runs to 157 residues: Protein BeeE (157 aa).

It belongs to the phage portal family.

The sequence is that of Protein BeeE (beeE) from Escherichia coli (strain K12).